A 228-amino-acid chain; its full sequence is Phosphatidylglycerophosphate phosphatase PTPMT2 (228 aa).

The span at 1 to 10 (MTDETEEDDT) shows a compositional bias: acidic residues. The interval 1–30 (MTDETEEDDTTQQRSSRNDGVSKNKGKGFK) is disordered. Residues tyrosine 48 and aspartate 126 each contribute to the substrate site. The Tyrosine-protein phosphatase domain occupies 66–213 (WWDQIDEYLL…VEEFSRLQSP (148 aa)). The active-site Phosphocysteine intermediate is cysteine 157. The short motif at 157–163 (CKAGRGR) is the Glucan phosphatase signature motif CXAGXGR element. Substrate is bound at residue 158–163 (KAGRGR).

It belongs to the protein-tyrosine phosphatase family. Non-receptor class dual specificity subfamily. As to expression, expressed in roots, leaves, stems and flowers. In terms of tissue distribution, expressed at low levels in stems and flowers.

It catalyses the reaction O-phospho-L-seryl-[protein] + H2O = L-seryl-[protein] + phosphate. The enzyme catalyses O-phospho-L-threonyl-[protein] + H2O = L-threonyl-[protein] + phosphate. It carries out the reaction O-phospho-L-tyrosyl-[protein] + H2O = L-tyrosyl-[protein] + phosphate. The catalysed reaction is a 1,2-diacyl-sn-glycero-3-phospho-(1'-sn-glycero-3'-phosphate) + H2O = a 1,2-diacyl-sn-glycero-3-phospho-(1'-sn-glycerol) + phosphate. The protein operates within phospholipid metabolism; phosphatidylglycerol biosynthesis; phosphatidylglycerol from CDP-diacylglycerol: step 2/2. In terms of biological role, exhibits phosphatidylglycerophosphate phosphatase activity. Involved in root growth and columella cells organization. May possess protein phosphatase activity. The sequence is that of Phosphatidylglycerophosphate phosphatase PTPMT2 from Arabidopsis thaliana (Mouse-ear cress).